Reading from the N-terminus, the 299-residue chain is Methylsterol monooxygenase 1-2 (299 aa).

3 helical membrane-spanning segments follow: residues 39–59 (CHNILFLFLIFSLVPLPLVFI), 96–116 (FILVVGPLQLVSYPSIQMIEI), and 118–138 (SGLPLPSCMEIVAQLVVYFLV). In terms of domain architecture, Fatty acid hydroxylase spans 132 to 267 (LVVYFLVEDY…FTYCDYIYGT (136 aa)). The Histidine box-1 motif lies at 147–151 (HRFFH). The Histidine box-2 signature appears at 160–164 (HHIHH). The helical transmembrane segment at 189 to 209 (TFLGPAIAPGHMITFWLWIAL) threads the bilayer. Positions 239–245 (YHDYHHY) match the Histidine box-3 motif.

It belongs to the sterol desaturase family. In terms of assembly, interacts with ACBP1. It depends on Fe cation as a cofactor. Expressed in embryo sacs, pollen and trichomes. Observed in leaves, roots, siliques and flowers.

The protein localises to the endoplasmic reticulum membrane. The catalysed reaction is 4,4-dimethyl-5alpha-cholest-7-en-3beta-ol + 6 Fe(II)-[cytochrome b5] + 3 O2 + 5 H(+) = 4alpha-carboxy-4beta-methyl-5alpha-cholest-7-ene-3beta-ol + 6 Fe(III)-[cytochrome b5] + 4 H2O. It catalyses the reaction 24-methylenecycloartanol + 6 Fe(II)-[cytochrome b5] + 3 O2 + 5 H(+) = 4alpha-carboxy-4beta,14alpha-dimethyl-9beta,19-cyclo-5alpha-ergost-24(24(1))-en-3beta-ol + 6 Fe(III)-[cytochrome b5] + 4 H2O. Non-heme iron oxygenase involved in sterols biosynthesis by catalyzing the removal of the first methyl group at the C-4 position. 4,4-dimethyl-9-beta,19-cyclopropylsterols such as 24-methylenecycloartanol are the preferred substrates. Acts as a rate-limiting enzyme in the sterol pathway via interaction with ACBP1; sterols serve as lipid modulators for gene expression of homeodomain-leucine zipper IV transcription factors. Together with SMO1-1, involved in the maintenance of sterol composition to balance auxin and cytokinin activities during embryogenesis. In Arabidopsis thaliana (Mouse-ear cress), this protein is Methylsterol monooxygenase 1-2.